The following is a 429-amino-acid chain: Uracil permease (429 aa).

Over 1–13 (MTRRAIGVSERPP) the chain is Cytoplasmic. Residues 14-37 (LLQTIPLSLQHLFAMFGATVLVPV) form a helical membrane-spanning segment. Residues 38-41 (LFHI) are Periplasmic-facing. A helical membrane pass occupies residues 42 to 61 (NPATVLLFNGIGTLLYLFIC). Topologically, residues 62–64 (KGK) are cytoplasmic. Residues 65-81 (IPAYLGSSFAFISPVLL) form a discontinuously helical membrane-spanning segment. F73 serves as a coordination point for uracil. The Periplasmic portion of the chain corresponds to 82–89 (LLPLGYEV). Residues 90-110 (ALGGFIMCGVLFCLVSFIVKK) form a helical membrane-spanning segment. Over 111–122 (AGTGWLDVLFPP) the chain is Cytoplasmic. Residues 123 to 144 (AAMGAIVAVIGLELAGVAAGMA) traverse the membrane as a helical segment. The Periplasmic portion of the chain corresponds to 145–155 (GLLPAEGQTPD). A helical membrane pass occupies residues 156–171 (SKTIIISITTLAVTVL). Over 172 to 178 (GSVLFRG) the chain is Cytoplasmic. Residues 179–199 (FLAIIPILIGVLVGYALSFAM) traverse the membrane as a helical segment. The Periplasmic segment spans residues 200–224 (GIVDTTPIINAHWFALPTLYTPRFE). Residues 225–248 (WFAILTILPAALVVIAEHVGHLVV) form a helical membrane-spanning segment. E241 lines the uracil pocket. The Cytoplasmic segment spans residues 249 to 261 (TANIVKKDLLRDP). The chain crosses the membrane as a helical span at residues 262 to 281 (GLHRSMFANGLSTVISGFFG). Residues 282–298 (STPNTTYGENIGVMAIT) traverse the membrane as a discontinuously helical segment. Uracil-binding residues include G289 and E290. Residues 299–301 (RVY) are Cytoplasmic-facing. The chain crosses the membrane as a helical span at residues 302 to 319 (STWVIGGAAIFAILLSCV). Residues 320–332 (GKLAAAIQMIPLP) are Periplasmic-facing. A helical transmembrane segment spans residues 333-354 (VMGGVSLLLYGVIGASGIRVLI). At 355 to 365 (ESKVDYNKAQN) the chain is on the cytoplasmic side. An intramembrane region (discontinuously helical) is located at residues 366 to 401 (LILTSVILIIGVSGAKVNIGAAELKGMALATIVGIG). Residues 402–429 (LSLIFKLISVLRPEEVVLDAEDADITDK) lie on the Cytoplasmic side of the membrane.

It belongs to the nucleobase:cation symporter-2 (NCS2) (TC 2.A.40) family.

The protein localises to the cell inner membrane. The catalysed reaction is uracil(in) + H(+)(in) = uracil(out) + H(+)(out). Its function is as follows. Transport of uracil in the cell. This chain is Uracil permease (uraA), found in Escherichia coli O157:H7.